We begin with the raw amino-acid sequence, 413 residues long: Chloramphenicol efflux pump MT0201 (413 aa).

Helical transmembrane passes span 23–43 (LSVLACAAFIYVTAEILPVGA), 55–75 (VVLVGTLLSWYALVAAVTTVP), 89–109 (LVVSLVCLTVSQLVSALAPNF), 110–130 (AVLAAGRVLCAVTHGLLWAVI), 150–170 (IYIGTSLALVVGSPLTAAMSL), 176–196 (LAAVCVTGAAAAVALAARLAL), 226–246 (VLTMIAVTGHFVSYTYIVVII), 256–276 (NLAWLLAAYGVAGLVSVPLVA), 286–306 (AVIVGMTGLTAAFTLLTALAF), 312–332 (AATALLGTGAIVLWGALATAV), 353–373 (GLYVTAFQIGIMAGALLGGLL), and 378–398 (LAMMLTASAGLMGVALFGMTV).

It belongs to the major facilitator superfamily.

It is found in the cell membrane. Active efflux pump that plays an important role in chloramphenicol resistance. This is Chloramphenicol efflux pump MT0201 from Mycobacterium tuberculosis (strain CDC 1551 / Oshkosh).